Reading from the N-terminus, the 163-residue chain is Photosystem II extrinsic protein V (163 aa).

Positions 1 to 26 are cleaved as a signal peptide; the sequence is MFRRLIGVVVATALLTFQLIVGSATA. Cys63, Cys66, His67, and His118 together coordinate heme c.

It belongs to the cytochrome c family. PsbV subfamily. In terms of assembly, PSII is composed of 1 copy each of membrane proteins PsbA, PsbB, PsbC, PsbD, PsbE, PsbF, PsbH, PsbI, PsbJ, PsbK, PsbL, PsbM, PsbT, PsbX, PsbY, PsbZ, Psb30/Ycf12, peripheral proteins PsbO, CyanoQ (PsbQ), PsbU, PsbV and a large number of cofactors. It forms dimeric complexes. Heme c serves as cofactor.

The protein localises to the cellular thylakoid membrane. One of the extrinsic, lumenal subunits of photosystem II (PSII). PSII is a light-driven water plastoquinone oxidoreductase, using light energy to abstract electrons from H(2)O, generating a proton gradient subsequently used for ATP formation. The extrinsic proteins stabilize the structure of photosystem II oxygen-evolving complex (OEC), the ion environment of oxygen evolution and protect the OEC against heat-induced inactivation. Low-potential cytochrome c that plays a role in the OEC of PSII. The protein is Photosystem II extrinsic protein V of Nostoc sp. (strain PCC 7120 / SAG 25.82 / UTEX 2576).